Reading from the N-terminus, the 367-residue chain is TATA-box-binding protein-like (367 aa).

A disordered region spans residues 1–26; the sequence is MKKQSKTHKVDYKYYNSGSKTSRNRN. A compositionally biased stretch (polar residues) spans 16–26; that stretch reads NSGSKTSRNRN.

This sequence belongs to the TBP family.

The polypeptide is TATA-box-binding protein-like (Acanthamoeba polyphaga (Amoeba)).